The sequence spans 194 residues: Fe/S biogenesis protein NfuA (194 aa).

Positions 151 and 154 each coordinate [4Fe-4S] cluster.

It belongs to the NfuA family. In terms of assembly, homodimer. Requires [4Fe-4S] cluster as cofactor.

Its function is as follows. Involved in iron-sulfur cluster biogenesis. Binds a 4Fe-4S cluster, can transfer this cluster to apoproteins, and thereby intervenes in the maturation of Fe/S proteins. Could also act as a scaffold/chaperone for damaged Fe/S proteins. The sequence is that of Fe/S biogenesis protein NfuA from Vibrio vulnificus (strain CMCP6).